A 90-amino-acid chain; its full sequence is N(2)-fixation sustaining protein CowN (90 aa).

Belongs to the CowN family.

Is required to sustain N(2)-dependent growth in the presence of low levels of carbon monoxide (CO). Probably acts by protecting the N(2) fixation ability of the nitrogenase complex, which is inactivated in the presence of CO. The chain is N(2)-fixation sustaining protein CowN from Halorhodospira halophila (strain DSM 244 / SL1) (Ectothiorhodospira halophila (strain DSM 244 / SL1)).